The primary structure comprises 441 residues: Proline--tRNA ligase (441 aa).

It belongs to the class-II aminoacyl-tRNA synthetase family. ProS type 2 subfamily. Homodimer.

The protein resides in the cytoplasm. The catalysed reaction is tRNA(Pro) + L-proline + ATP = L-prolyl-tRNA(Pro) + AMP + diphosphate. In terms of biological role, catalyzes the attachment of proline to tRNA(Pro) in a two-step reaction: proline is first activated by ATP to form Pro-AMP and then transferred to the acceptor end of tRNA(Pro). The polypeptide is Proline--tRNA ligase (Afipia carboxidovorans (strain ATCC 49405 / DSM 1227 / KCTC 32145 / OM5) (Oligotropha carboxidovorans)).